A 223-amino-acid chain; its full sequence is Small ribosomal subunit protein uS3 (223 aa).

The KH type-2 domain maps to 38-106 (LKAELKEKLK…EVYIDIQEVH (69 aa)).

The protein belongs to the universal ribosomal protein uS3 family. Part of the 30S ribosomal subunit. Forms a tight complex with proteins S10 and S14.

In terms of biological role, binds the lower part of the 30S subunit head. Binds mRNA in the 70S ribosome, positioning it for translation. This chain is Small ribosomal subunit protein uS3, found in Koribacter versatilis (strain Ellin345).